Consider the following 444-residue polypeptide: Chromosomal replication initiator protein DnaA (444 aa).

The segment at 1-73 (MDSSAQQLWH…AEVVQDIVGY (73 aa)) is domain I, interacts with DnaA modulators. The segment at 73-104 (YPVEIQLTAQQGDLIAIFQPHTSLESELSPTN) is domain II. The segment at 105-321 (QLNPKYNFSR…GALIRATTYI (217 aa)) is domain III, AAA+ region. G149, G151, K152, and T153 together coordinate ATP. Residues 322-444 (SISGLPMTVE…ERINSLSRNQ (123 aa)) are domain IV, binds dsDNA.

The protein belongs to the DnaA family. Oligomerizes as a right-handed, spiral filament on DNA at oriC.

The protein resides in the cytoplasm. Functionally, plays an essential role in the initiation and regulation of chromosomal replication. ATP-DnaA binds to the origin of replication (oriC) to initiate formation of the DNA replication initiation complex once per cell cycle. Binds the DnaA box (a 9 base pair repeat at the origin) and separates the double-stranded (ds)DNA. Forms a right-handed helical filament on oriC DNA; dsDNA binds to the exterior of the filament while single-stranded (ss)DNA is stabiized in the filament's interior. The ATP-DnaA-oriC complex binds and stabilizes one strand of the AT-rich DNA unwinding element (DUE), permitting loading of DNA polymerase. After initiation quickly degrades to an ADP-DnaA complex that is not apt for DNA replication. Binds acidic phospholipids. The sequence is that of Chromosomal replication initiator protein DnaA from Microcystis aeruginosa (strain NIES-843 / IAM M-2473).